Consider the following 588-residue polypeptide: Adenine deaminase (588 aa).

It belongs to the metallo-dependent hydrolases superfamily. Adenine deaminase family. The cofactor is Mn(2+).

The catalysed reaction is adenine + H2O + H(+) = hypoxanthine + NH4(+). The sequence is that of Adenine deaminase from Desulforamulus reducens (strain ATCC BAA-1160 / DSM 100696 / MI-1) (Desulfotomaculum reducens).